Consider the following 123-residue polypeptide: Large ribosomal subunit protein uL14 (123 aa).

This sequence belongs to the universal ribosomal protein uL14 family. In terms of assembly, part of the 50S ribosomal subunit. Forms a cluster with proteins L3 and L19. In the 70S ribosome, L14 and L19 interact and together make contacts with the 16S rRNA in bridges B5 and B8.

Its function is as follows. Binds to 23S rRNA. Forms part of two intersubunit bridges in the 70S ribosome. This is Large ribosomal subunit protein uL14 from Buchnera aphidicola subsp. Acyrthosiphon kondoi (Acyrthosiphon kondoi symbiotic bacterium).